Consider the following 350-residue polypeptide: Transmembrane protein 185A (350 aa).

A run of 7 helical transmembrane segments spans residues 16 to 36, 41 to 61, 81 to 101, 111 to 131, 177 to 197, 211 to 231, and 240 to 260; these read LIYA…DGII, WAVF…ASVG, FKAM…EVLV, FWLL…AACV, ILMS…VLFL, ITMA…EILL, and AFSC…LMAT. Residues 298–350 are mediates interaction with MAP1B; sequence DLHHEDNEETEETPVPEPPKIAPMFRKKARVVITQSPGKYALPPPKLNIEMPD.

It belongs to the TMEM185 family. As to quaternary structure, interacts with MAP1B.

Its subcellular location is the cell projection. The protein localises to the dendrite. It is found in the membrane. This is Transmembrane protein 185A (TMEM185A) from Pongo abelii (Sumatran orangutan).